An 81-amino-acid polypeptide reads, in one-letter code: Exodeoxyribonuclease 7 small subunit (81 aa).

The protein belongs to the XseB family. Heterooligomer composed of large and small subunits.

It localises to the cytoplasm. The catalysed reaction is Exonucleolytic cleavage in either 5'- to 3'- or 3'- to 5'-direction to yield nucleoside 5'-phosphates.. Bidirectionally degrades single-stranded DNA into large acid-insoluble oligonucleotides, which are then degraded further into small acid-soluble oligonucleotides. In Nitratidesulfovibrio vulgaris (strain ATCC 29579 / DSM 644 / CCUG 34227 / NCIMB 8303 / VKM B-1760 / Hildenborough) (Desulfovibrio vulgaris), this protein is Exodeoxyribonuclease 7 small subunit.